We begin with the raw amino-acid sequence, 167 residues long: Insertion element IS1 2 protein InsB (167 aa).

It belongs to the transposase 27 family.

Absolutely required for transposition of IS1. The chain is Insertion element IS1 2 protein InsB (insB2) from Escherichia coli (strain K12).